Consider the following 283-residue polypeptide: Nudix hydrolase 6 (283 aa).

In terms of domain architecture, Nudix hydrolase spans 101–233 (SHRIGVGAFV…KKELFRFMAN (133 aa)). The Nudix box signature appears at 139–160 (GVVKEGENIWEGALREVEEETG). Residues Glu154, Glu158, and Glu204 each coordinate a divalent metal cation.

Belongs to the Nudix hydrolase family. Mg(2+) is required as a cofactor. It depends on Mn(2+) as a cofactor. In terms of tissue distribution, expressed in stems and leaves. Weakly or not expressed in roots.

The enzyme catalyses ADP-D-ribose + H2O = D-ribose 5-phosphate + AMP + 2 H(+). The catalysed reaction is NAD(+) + H2O = beta-nicotinamide D-ribonucleotide + AMP + 2 H(+). It carries out the reaction NADH + H2O = reduced beta-nicotinamide D-ribonucleotide + AMP + 2 H(+). In terms of biological role, probably mediates the hydrolysis of some nucleoside diphosphate derivatives. In vitro, it can use both NADH and ADP-ribose as substrates; however the relevance of such substrates in vivo is unclear. The chain is Nudix hydrolase 6 from Arabidopsis thaliana (Mouse-ear cress).